Here is a 277-residue protein sequence, read N- to C-terminus: Ras suppressor protein 1 (277 aa).

Residues 1-23 (MSKSLKKLVEESREKNQPEVDMS) form a disordered region. Ser-2 carries the post-translational modification N-acetylserine. Over residues 7–23 (KLVEESREKNQPEVDMS) the composition is skewed to basic and acidic residues. LRR repeat units follow at residues 41–63 (HITQ…AELK), 64–85 (NLEV…ISSL), 87–109 (KLKH…GSLP), 110–133 (ALEV…FFYL), 135–156 (TLRA…IGKL), 158–179 (KLQI…IGEL), and 181–202 (QLKE…LGNL). The disordered stretch occupies residues 250 to 277 (MQANPEPPKKNNDKSKKISRKPLAAKNK). Residues 256-265 (PPKKNNDKSK) are compositionally biased toward basic and acidic residues.

Its function is as follows. Potentially plays a role in the Ras signal transduction pathway. Capable of suppressing v-Ras transformation in vitro. The sequence is that of Ras suppressor protein 1 (RSU1) from Bos taurus (Bovine).